Here is a 128-residue protein sequence, read N- to C-terminus: Large ribosomal subunit protein bL17 (128 aa).

Belongs to the bacterial ribosomal protein bL17 family. As to quaternary structure, part of the 50S ribosomal subunit. Contacts protein L32.

This is Large ribosomal subunit protein bL17 from Streptococcus suis (strain 98HAH33).